Reading from the N-terminus, the 586-residue chain is Urease subunit alpha (586 aa).

Positions 134-586 (GAIDTHIHFI…LPMAQRYFLF (453 aa)) constitute a Urease domain. His139, His141, and Lys222 together coordinate Ni(2+). Lys222 bears the N6-carboxylysine mark. Residue His224 participates in substrate binding. 2 residues coordinate Ni(2+): His251 and His277. Catalysis depends on His325, which acts as the Proton donor. Residue Asp365 participates in Ni(2+) binding.

This sequence belongs to the metallo-dependent hydrolases superfamily. Urease alpha subunit family. As to quaternary structure, heterotrimer of UreA (gamma), UreB (beta) and UreC (alpha) subunits. Three heterotrimers associate to form the active enzyme. Ni cation is required as a cofactor. Post-translationally, carboxylation allows a single lysine to coordinate two nickel ions.

The protein localises to the cytoplasm. It catalyses the reaction urea + 2 H2O + H(+) = hydrogencarbonate + 2 NH4(+). It functions in the pathway nitrogen metabolism; urea degradation; CO(2) and NH(3) from urea (urease route): step 1/1. This chain is Urease subunit alpha, found in Gloeothece citriformis (strain PCC 7424) (Cyanothece sp. (strain PCC 7424)).